A 319-amino-acid chain; its full sequence is Ornithine carbamoyltransferase (319 aa).

Carbamoyl phosphate is bound by residues 55 to 58 (STRT), Q82, R106, and 133 to 136 (HPCQ). L-ornithine contacts are provided by residues N171, D234, and 238 to 239 (SM). Carbamoyl phosphate contacts are provided by residues 274–275 (CL) and R302.

Belongs to the aspartate/ornithine carbamoyltransferase superfamily. OTCase family.

It is found in the cytoplasm. The enzyme catalyses carbamoyl phosphate + L-ornithine = L-citrulline + phosphate + H(+). It participates in amino-acid biosynthesis; L-arginine biosynthesis; L-arginine from L-ornithine and carbamoyl phosphate: step 1/3. In terms of biological role, reversibly catalyzes the transfer of the carbamoyl group from carbamoyl phosphate (CP) to the N(epsilon) atom of ornithine (ORN) to produce L-citrulline. This chain is Ornithine carbamoyltransferase (argF), found in Corynebacterium glutamicum (strain ATCC 13032 / DSM 20300 / JCM 1318 / BCRC 11384 / CCUG 27702 / LMG 3730 / NBRC 12168 / NCIMB 10025 / NRRL B-2784 / 534).